The primary structure comprises 968 residues: MPFTLGQRWISDTESELGLGTVVAMDARTVTLLFPSTGENRLYARSDSPVTRVMFNPGDTITSHEGWQLHIDEVKEENGLLVYVGTRLDTEETNVTLREVLLDSKLVFSKPQDRLFAGQIDRMDRFALRYRARKFQSEQYRMPYSGLRGQRTNLIPHQLNIAHDVGRRHAPRVLLADEVGLGKTIEAGMILHQQLLSGAAERVLIIVPETLQHQWLVEMLRRFNLRFALFDDERYTEAQHDAYNPFETEQLVICSLDFARRNKQRLEHLCDAEWDLLVVDEAHHLVWSTDAPSREYMAIEQLAERVPGVLLLTATPEQLGMESHFARLRLLDPNRFHDFEQFVEEQKNYRPVADAVAMLLAGNKLSNDELNRLGDLIGEQDIEPLLQAANSDRDDAQAARDELVSMLMDRHGTSRVLFRNTRNGVKGFPKRELHTVKLPLPTQYQTAIKVSGIMGARKSAEDRARDMLYPEQIYQEFEGDTGTWWNFDPRVEWLMGYLTSHRSQKVLVICTKATTALQLEQVLREREGIRAAVFHEGMSIIERDRAAAWFAEEDTGAQVLLCSEIGSEGRNFQFASNLVMFDLPFNPDLLEQRIGRLDRIGQAHDIQIHVPYLEKTAQSVLVRWYHEGLDAFEHTCPTGRAIYDSAYASLINYLAAPEETDGFDDLIKSCREQHEALKAQLEQGRDRLLEIHSNGGEKAQQLAQSIEEQDDDTNLIAFAMNLFDIVGINQDDRGDNLIVLTPSDHMLVPDFPGLPEDGCTITFERDVALSREDAQFITWEHPLIRNGLDLILSGDTGSSTISLLKNKALPVGTLLVELVYVVEAQAPKQLQLNRFLPPTPVRMLLDKNGNNLAAQVEFETFNRQLSAVNRHTGSKLVNAVQQDVHAILQLGETQIEKSARALIDNARREADEKLSGELSRLEALRAVNPNIRDDELAAIDSNRQQVLESLNQAGWRLDALRLIVVTHQ.

The Helicase ATP-binding domain maps to 164-334 (DVGRRHAPRV…FARLRLLDPN (171 aa)). 177–184 (DEVGLGKT) serves as a coordination point for ATP. A DEAH box motif is present at residues 280–283 (DEAH). Residues 490–685 (RVEWLMGYLT…ALKAQLEQGR (196 aa)) form the Helicase C-terminal domain.

Belongs to the SNF2/RAD54 helicase family. RapA subfamily. As to quaternary structure, interacts with the RNAP. Has a higher affinity for the core RNAP than for the holoenzyme. Its ATPase activity is stimulated by binding to RNAP.

Functionally, transcription regulator that activates transcription by stimulating RNA polymerase (RNAP) recycling in case of stress conditions such as supercoiled DNA or high salt concentrations. Probably acts by releasing the RNAP, when it is trapped or immobilized on tightly supercoiled DNA. Does not activate transcription on linear DNA. Probably not involved in DNA repair. The protein is RNA polymerase-associated protein RapA of Salmonella paratyphi C (strain RKS4594).